Reading from the N-terminus, the 205-residue chain is Pyridoxal 5'-phosphate synthase subunit PdxT (205 aa).

L-glutamine is bound at residue 54–56; sequence GES. Residue cysteine 86 is the Nucleophile of the active site. L-glutamine-binding positions include arginine 118 and 147 to 148; that span reads IR. Residues histidine 183 and glutamate 185 each act as charge relay system in the active site.

It belongs to the glutaminase PdxT/SNO family. As to quaternary structure, in the presence of PdxS, forms a dodecamer of heterodimers. Only shows activity in the heterodimer.

It catalyses the reaction aldehydo-D-ribose 5-phosphate + D-glyceraldehyde 3-phosphate + L-glutamine = pyridoxal 5'-phosphate + L-glutamate + phosphate + 3 H2O + H(+). The enzyme catalyses L-glutamine + H2O = L-glutamate + NH4(+). The protein operates within cofactor biosynthesis; pyridoxal 5'-phosphate biosynthesis. In terms of biological role, catalyzes the hydrolysis of glutamine to glutamate and ammonia as part of the biosynthesis of pyridoxal 5'-phosphate. The resulting ammonia molecule is channeled to the active site of PdxS. In Nitrosopumilus maritimus (strain SCM1), this protein is Pyridoxal 5'-phosphate synthase subunit PdxT.